The sequence spans 725 residues: Antigen peptide transporter 1 (725 aa).

Over 1–8 (MAAHAWPT) the chain is Cytoplasmic. A helical membrane pass occupies residues 9 to 29 (AALLLLLVDWLLLRPVLPGIF). Residues 30 to 38 (SLLVPEVPL) lie on the Lumenal side of the membrane. Residues 39–60 (LRVWAVGLSRWAILGLGVRGVL) traverse the membrane as a helical segment. At 61 to 67 (GVTAGAR) the chain is on the cytoplasmic side. Residues 68-88 (GWLAALQPLVAALGLALPGLA) traverse the membrane as a helical segment. Residues 89-110 (SFRKLSAWGALREGDNAGLLHW) are Lumenal-facing. A helical membrane pass occupies residues 111–131 (NSRLDAFVLSYVAALPAAALW). Topologically, residues 132–163 (HKLGGFWAPSGHKGAGDMLCRMLGFLDSKKGR) are cytoplasmic. A helical transmembrane segment spans residues 164–184 (LHLVLVLLILSCLGEMAIPFF). Positions 164–447 (LHLVLVLLIL…LLSIYPSMQK (284 aa)) constitute an ABC transmembrane type-1 domain. Residues 185–204 (TGRITDWILQDKTAPSFARN) lie on the Lumenal side of the membrane. The helical transmembrane segment at 205-225 (MWLMCILTIASTVLEFAGDGI) threads the bilayer. The Cytoplasmic portion of the chain corresponds to 226–275 (YNITMGHMHSRVHGEVFRAVLHQETGFFLKNPTGSITSRVTEDTSNVCES). The chain crosses the membrane as a helical span at residues 276 to 296 (ISDKLNLFLWYLGRGLCLLAF). The Lumenal segment spans residues 297–305 (MIWGSFYLT). Residues 306–326 (VVTLLSLPLLFLLPRRLGKVY) form a helical membrane-spanning segment. Over 327–395 (QSLAVKVQES…VTEVWTMSVS (69 aa)) the chain is Cytoplasmic. Residues 352 to 397 (PTVRSFANEEGEAQKFRQKLEEMKPLNKKEALAYVTEVWTMSVSGM) are part of the peptide-binding site. A helical transmembrane segment spans residues 396-416 (GMLLKVGILYLGGQLVVRGAV). At 417–420 (SSGN) the chain is on the lumenal side. Residues 421 to 441 (LVSFVLYQLQFTRAVEVLLSI) traverse the membrane as a helical segment. Residues 430 to 464 (QFTRAVEVLLSIYPSMQKSVGASEKIFEYLDRTPC) are part of the peptide-binding site. At 442–725 (YPSMQKSVGA…MVEALAAPSD (284 aa)) the chain is on the cytoplasmic side. An ABC transporter domain is found at 480–719 (VKFQDVSFAY…GGCYRSMVEA (240 aa)). ATP-binding positions include 515 to 523 (GPNGSGKST), 618 to 624 (NQLSGGQ), and Gln-678. Position 522 (Ser-522) interacts with Mg(2+).

The protein belongs to the ABC transporter superfamily. ABCB family. MHC peptide exporter (TC 3.A.1.209) subfamily. In terms of assembly, heterodimer of TAP1 and TAP2 (TAP1-TAP2). A component of the peptide loading complex (PLC), interacts via TAPBP with MHCI heterodimer; this interaction mediates peptide-MHCI assembly. Interacts with PSMB5 and PSMB8. It depends on Mg(2+) as a cofactor.

The protein localises to the endoplasmic reticulum membrane. It catalyses the reaction a peptide antigen(in) + ATP + H2O = a peptide antigen(out) + ADP + phosphate + H(+). ABC transporter associated with antigen processing. In complex with TAP2 mediates unidirectional translocation of peptide antigens from cytosol to endoplasmic reticulum (ER) for loading onto MHC class I (MHCI) molecules. Uses the chemical energy of ATP to export peptides against the concentration gradient. During the transport cycle alternates between 'inward-facing' state with peptide binding site facing the cytosol to 'outward-facing' state with peptide binding site facing the ER lumen. Peptide antigen binding to ATP-loaded TAP1-TAP2 induces a switch to hydrolysis-competent 'outward-facing' conformation ready for peptide loading onto nascent MHCI molecules. Subsequently ATP hydrolysis resets the transporter to the 'inward facing' state for a new cycle. As a component of the peptide loading complex (PLC), acts as a molecular scaffold essential for peptide-MHCI assembly and antigen presentation. This chain is Antigen peptide transporter 1 (Tap1), found in Rattus norvegicus (Rat).